A 157-amino-acid chain; its full sequence is NADPH-dependent 7-cyano-7-deazaguanine reductase (157 aa).

Cys55 functions as the Thioimide intermediate in the catalytic mechanism. The active-site Proton donor is Asp62. Residues 77–79 (VES) and 96–97 (HE) contribute to the substrate site.

This sequence belongs to the GTP cyclohydrolase I family. QueF type 1 subfamily.

It is found in the cytoplasm. The catalysed reaction is 7-aminomethyl-7-carbaguanine + 2 NADP(+) = 7-cyano-7-deazaguanine + 2 NADPH + 3 H(+). Its pathway is tRNA modification; tRNA-queuosine biosynthesis. Functionally, catalyzes the NADPH-dependent reduction of 7-cyano-7-deazaguanine (preQ0) to 7-aminomethyl-7-deazaguanine (preQ1). This is NADPH-dependent 7-cyano-7-deazaguanine reductase from Neisseria meningitidis serogroup B (strain ATCC BAA-335 / MC58).